A 49-amino-acid polypeptide reads, in one-letter code: DCASGPCCRDCKFLEEGTICNMARGDDMDDYCNGKTCDCPRNPHKWPAP.

In terms of domain architecture, Disintegrin spans 1 to 47; the sequence is DCASGPCCRDCKFLEEGTICNMARGDDMDDYCNGKTCDCPRNPHKWP. 4 cysteine pairs are disulfide-bonded: cysteine 2/cysteine 11, cysteine 7/cysteine 32, cysteine 8/cysteine 37, and cysteine 20/cysteine 39. Residues 24 to 26 carry the Cell attachment site motif; it reads RGD.

This sequence belongs to the venom metalloproteinase (M12B) family. P-II subfamily. P-IIa sub-subfamily. Monomer. As to expression, expressed by the venom gland.

Its subcellular location is the secreted. Has antiplatelet activities on guinea pig, followed by human, rabbit and rat platelet-rich plasma. The protein is Disintegrin echistatin-gamma of Echis pyramidum leakeyi (Leakey's carpet viper).